The primary structure comprises 442 residues: Phosphoglucosamine mutase (442 aa).

Ser98 (phosphoserine intermediate) is an active-site residue. Mg(2+) contacts are provided by Ser98, Asp236, Asp238, and Asp240. At Ser98 the chain carries Phosphoserine.

It belongs to the phosphohexose mutase family. Requires Mg(2+) as cofactor. In terms of processing, activated by phosphorylation.

The catalysed reaction is alpha-D-glucosamine 1-phosphate = D-glucosamine 6-phosphate. Its function is as follows. Catalyzes the conversion of glucosamine-6-phosphate to glucosamine-1-phosphate. This chain is Phosphoglucosamine mutase, found in Natranaerobius thermophilus (strain ATCC BAA-1301 / DSM 18059 / JW/NM-WN-LF).